The following is a 193-amino-acid chain: Protein SPEAR3 (193 aa).

Disordered regions lie at residues 1–50 and 85–104; these read MGSS…GVAQ and GYPS…SSPP. The segment covering 14–26 has biased composition (low complexity); that stretch reads SSSSSPTSSSSSP. The SPL signature appears at 44-52; it reads RGLGVAQLE. Positions 86-101 are enriched in low complexity; sequence YPSIPSSSPSFSYASS. The EAR motif lies at 187–193; sequence LDLELRL.

As to quaternary structure, interacts with TPL and the TPR corepressors TPR1, TPR2, TPR3, TPR4, and with the TCP transcription factors TCP2, TCP3, TCP4, TCP5, TCP10, TCP13, TCP17 and TCP24. Interacts with SPL and SPEAR2. In terms of tissue distribution, expressed in shoot apical meristem, cotyledons and leaves. Detected at the leaf margins and in the vascular bundles at the base of the leaves.

The protein localises to the nucleus. Functionally, transcriptional regulator of leaf development. Acts as an adapter-like transcriptional repressor recruiting TPL/TPR corepressors to inhibit the CIN-like TCP transcription factors. The polypeptide is Protein SPEAR3 (Arabidopsis thaliana (Mouse-ear cress)).